Here is a 214-residue protein sequence, read N- to C-terminus: GTP cyclohydrolase 1 (214 aa).

The Zn(2+) site is built by cysteine 101, histidine 104, and cysteine 172.

Belongs to the GTP cyclohydrolase I family. As to quaternary structure, toroid-shaped homodecamer, composed of two pentamers of five dimers.

It catalyses the reaction GTP + H2O = 7,8-dihydroneopterin 3'-triphosphate + formate + H(+). It participates in cofactor biosynthesis; 7,8-dihydroneopterin triphosphate biosynthesis; 7,8-dihydroneopterin triphosphate from GTP: step 1/1. The protein is GTP cyclohydrolase 1 of Gloeobacter violaceus (strain ATCC 29082 / PCC 7421).